Consider the following 1438-residue polypeptide: Pyochelin synthetase PchE (1438 aa).

In terms of domain architecture, Carrier 1 spans 6–85 (DSRTALRDWL…AWLDLLACAD (80 aa)). Serine 46 is subject to O-(pantetheine 4'-phosphoryl)serine. The interval 136–442 (RTRDVDPQRL…ARRQGQPRSA (307 aa)) is condensation/cyclization. An adenylation region spans residues 563–950 (RAAEAPDADA…GRVDQQVKVR (388 aa)). The Carrier 2 domain maps to 1350–1425 (EPLEAHEQAL…GLARHLQVQT (76 aa)). Serine 1385 carries the post-translational modification O-(pantetheine 4'-phosphoryl)serine.

Belongs to the NRP synthetase family. The cofactor is pantetheine 4'-phosphate.

The catalysed reaction is holo-[peptidyl-carrier protein] + L-cysteine + ATP = L-cysteinyl-[peptidyl-carrier protein] + AMP + diphosphate. It functions in the pathway siderophore biosynthesis. It participates in antifungal biosynthesis. In terms of biological role, involved in the biosynthesis of the siderophore pyochelin. Accepts salicylate activated by PchD at the first peptidyl carrier domain (ArCP), and activates and fixes one molecule of cysteine at the second peptidyl carrier domain (PCP1) via a thioester linkage to the phosphopanthetheine moiety. Then catalyzes the condensation reaction between the salicylate bound to the first site and the cysteine bound to the second site, and the cyclization of the cysteine to form the salicyl-thiazolinyl-S-PCP1 intermediate at the second site. When this intermediate is released by the action of a thioesterase, it produces the antifungal antibiotic dihydroaeruginoic acid (Dha or hydroxyphenyl-thiazolinyl-carboxylate). This chain is Pyochelin synthetase PchE, found in Pseudomonas aeruginosa (strain ATCC 15692 / DSM 22644 / CIP 104116 / JCM 14847 / LMG 12228 / 1C / PRS 101 / PAO1).